The following is a 285-amino-acid chain: Bifunctional protein FolD (285 aa).

NADP(+) contacts are provided by residues 164–166 (GRS), Ser193, and Ile234.

This sequence belongs to the tetrahydrofolate dehydrogenase/cyclohydrolase family. Homodimer.

The enzyme catalyses (6R)-5,10-methylene-5,6,7,8-tetrahydrofolate + NADP(+) = (6R)-5,10-methenyltetrahydrofolate + NADPH. It carries out the reaction (6R)-5,10-methenyltetrahydrofolate + H2O = (6R)-10-formyltetrahydrofolate + H(+). It participates in one-carbon metabolism; tetrahydrofolate interconversion. Functionally, catalyzes the oxidation of 5,10-methylenetetrahydrofolate to 5,10-methenyltetrahydrofolate and then the hydrolysis of 5,10-methenyltetrahydrofolate to 10-formyltetrahydrofolate. In Desulfovibrio desulfuricans (strain ATCC 27774 / DSM 6949 / MB), this protein is Bifunctional protein FolD.